Reading from the N-terminus, the 339-residue chain is Geranylgeranyl transferase type-2 subunit beta (339 aa).

Threonine 11 carries the phosphothreonine modification. PFTB repeat units lie at residues leucine 28–glycine 69, arginine 76–aspartate 117, valine 124–glycine 165, valine 172–serine 213, serine 220–glycine 261, and arginine 268–glycine 310. Residues histidine 198 to glycine 200 and arginine 240 to lysine 243 contribute to the geranylgeranyl diphosphate site. The Zn(2+) site is built by aspartate 246 and cysteine 248. Geranylgeranyl diphosphate-binding positions include tyrosine 249 and tyrosine 249–tryptophan 252. Histidine 298 lines the Zn(2+) pocket.

The protein belongs to the protein prenyltransferase subunit beta family. In terms of assembly, heterotrimer composed of RABGGTA, RABGGTB and CHM; within this trimer, RABGGTA and RABGGTB form the catalytic component B, while CHM (component A) mediates peptide substrate binding. The Rab GGTase dimer (RGGT) interacts with CHM (component A) prior to Rab protein binding; the association is stabilized by geranylgeranyl pyrophosphate (GGpp). The CHM:RGGT:Rab complex is destabilized by GGpp. Interaction of RABGGTB with prenylated PTP4A2 precludes its association with RABGGTA and inhibits enzyme activity. Interacts with CHODL. Interacts with non-phosphorylated form of RAB8A; phosphorylation of RAB8A at 'Thr-72' disrupts this interaction. Requires Zn(2+) as cofactor. Ubiquitous. Detected in all the major organs in adult animals.

It catalyses the reaction geranylgeranyl diphosphate + L-cysteinyl-[protein] = S-geranylgeranyl-L-cysteinyl-[protein] + diphosphate. The enzymatic reaction requires the aid of a Rab escort protein (also called component A), such as CHM. Catalyzes the transfer of a geranylgeranyl moiety from geranylgeranyl diphosphate to both cysteines of Rab proteins with the C-terminal sequence -XXCC, -XCXC and -CCXX, such as RAB1A, RAB3A, RAB5A and RAB7A. This Mus musculus (Mouse) protein is Geranylgeranyl transferase type-2 subunit beta (Rabggtb).